A 503-amino-acid chain; its full sequence is Maturase K (503 aa).

It belongs to the intron maturase 2 family. MatK subfamily.

It localises to the plastid. The protein localises to the chloroplast. In terms of biological role, usually encoded in the trnK tRNA gene intron. Probably assists in splicing its own and other chloroplast group II introns. This is Maturase K from Panax quinquefolius (American ginseng).